Here is a 589-residue protein sequence, read N- to C-terminus: MPLFLEEHAEYLKRYLEQALEPISDADASVLSDYAMALLRHDSSEEEVRQLCYSQLEDFLRQETIPFVDKIFDVLREKSYLEGASNMPSTGMVTEEVSRYSPTSSMIPATNSMETNFNNSLPAVGKTNTFPSQVPNMFGPPLYHPAATAPSEFMPSIPGFGNLPNPAMPPIPFLPFNPAAQPPFPPPFKMRGKRGFGMRHEHNSELRRHSPGNRRFNPYKAYPQPHLGHRFSRNAGNDPTSTALEVRNIPEEHFNEENIRSFFSKFGVLEKVELNPTHHSCVLEFTSHEAANNAWSSPEPIFNNRFIKIFWYNPSKGFHNRPKKFASHKSPTTSDSSNVESSEDVDPASLLQNEEFHKLIEERQRQHEERLKRINANKKALEELNQKKRELAQQQLKEQELLMQKIKETDRSGNKRLMLLETQHSLLKAEADCLGLPVSNVSESPAASNGSHHPYASGLPQRGTNTFFRGRGRGRGDMFASMSIDNRPTKLRVINVSPEKNEALLQYLFTVGGYEEITEPSTTERLISFQNRNSAEKFFGGVRNVEKLQELELAWVPKTAVTTNTTSMETGESNTSDNMNIEVEEGRWR.

Residues 242–314 (TALEVRNIPE…RFIKIFWYNP (73 aa)) form the RRM domain. Disordered stretches follow at residues 322–348 (PKKF…VDPA), 443–465 (ESPA…RGTN), and 566–589 (TSME…GRWR). Ser330 is modified (phosphoserine). Low complexity predominate over residues 330–340 (SPTTSDSSNVE). The residue at position 332 (Thr332) is a Phosphothreonine. Ser334 bears the Phosphoserine mark. The span at 566–579 (TSMETGESNTSDNM) shows a compositional bias: polar residues.

Its subcellular location is the nucleus. This is an uncharacterized protein from Schizosaccharomyces pombe (strain 972 / ATCC 24843) (Fission yeast).